Consider the following 201-residue polypeptide: ATP-dependent Clp protease proteolytic subunit (201 aa).

Ser100 serves as the catalytic Nucleophile. His125 is an active-site residue.

Belongs to the peptidase S14 family. In terms of assembly, component of the chloroplastic Clp protease core complex.

It localises to the plastid. It is found in the chloroplast stroma. The enzyme catalyses Hydrolysis of proteins to small peptides in the presence of ATP and magnesium. alpha-casein is the usual test substrate. In the absence of ATP, only oligopeptides shorter than five residues are hydrolyzed (such as succinyl-Leu-Tyr-|-NHMec, and Leu-Tyr-Leu-|-Tyr-Trp, in which cleavage of the -Tyr-|-Leu- and -Tyr-|-Trp bonds also occurs).. Functionally, cleaves peptides in various proteins in a process that requires ATP hydrolysis. Has a chymotrypsin-like activity. Plays a major role in the degradation of misfolded proteins. The sequence is that of ATP-dependent Clp protease proteolytic subunit from Chloranthus spicatus (Chulantree).